Reading from the N-terminus, the 248-residue chain is Granzyme B (248 aa).

The N-terminal stretch at 1 to 18 (MKLLLLLLSFSLAPKTEA) is a signal peptide. The propeptide at 19–20 (GE) is activation peptide. Residues 21-246 (IIGGHEAKPH…FLSWIKKTMK (226 aa)) form the Peptidase S1 domain. Cys-50 and Cys-66 are oxidised to a cystine. Active-site charge relay system residues include His-65 and Asp-109. 2 disulfide bridges follow: Cys-143–Cys-210 and Cys-174–Cys-189. Ser-204 (charge relay system) is an active-site residue.

Belongs to the peptidase S1 family. Granzyme subfamily.

It is found in the secreted. The protein localises to the cytolytic granule. The catalysed reaction is Preferential cleavage: -Asp-|-Xaa- &gt;&gt; -Asn-|-Xaa- &gt; -Met-|-Xaa-, -Ser-|-Xaa-.. Inactivated by the serine protease inhibitor diisopropylfluorophosphate. Its function is as follows. Abundant protease in the cytosolic granules of cytotoxic T-cells and NK-cells which activates caspase-independent pyroptosis when delivered into the target cell through the immunological synapse. It cleaves after Asp. Once delivered into the target cell, acts by catalyzing cleavage of gasdermin-E (GSDME), releasing the pore-forming moiety of GSDME, thereby triggering pyroptosis and target cell death. Seems to be linked to an activation cascade of caspases (aspartate-specific cysteine proteases) responsible for apoptosis execution. Cleaves caspase-3 and -9 (CASP3 and CASP9, respectively) to give rise to active enzymes mediating apoptosis. Cleaves and activates CASP7 in response to bacterial infection, promoting plasma membrane repair. In Rattus norvegicus (Rat), this protein is Granzyme B (Gzmb).